The sequence spans 405 residues: Aspartokinase (405 aa).

An ATP-binding site is contributed by Lys7–Gly10. Arg25–Arg30 is a binding site for substrate. Ser41 contributes to the ATP binding site. Substrate is bound by residues Thr47 to Glu49, Glu74, Leu125 to Glu126, Arg150 to Ser153, and Ser153. Residues Thr173–Asp174, Tyr179–His184, and Arg209 contribute to the ATP site. ACT domains follow at residues Ile263–Val342 and Ile344–Ala405. Residues Asp270, Ala288–Asp290, Gln294, Val355–Pro356, Asn369–Ile370, and Ser376–Glu377 contribute to the substrate site.

Belongs to the aspartokinase family. As to quaternary structure, tetramer consisting of 2 isoforms Alpha (catalytic and regulation) and of a homodimer of 2 isoforms Beta (regulation).

It carries out the reaction L-aspartate + ATP = 4-phospho-L-aspartate + ADP. Its pathway is amino-acid biosynthesis; L-lysine biosynthesis via DAP pathway; (S)-tetrahydrodipicolinate from L-aspartate: step 1/4. It functions in the pathway amino-acid biosynthesis; L-methionine biosynthesis via de novo pathway; L-homoserine from L-aspartate: step 1/3. It participates in amino-acid biosynthesis; L-threonine biosynthesis; L-threonine from L-aspartate: step 1/5. In terms of biological role, catalyzes the phosphorylation of the beta-carboxyl group of aspartic acid with ATP to yield 4-phospho-L-aspartate, which is involved in the branched biosynthetic pathway leading to the biosynthesis of amino acids lysine, threonine, isoleucine and methionine. The sequence is that of Aspartokinase (ask) from Thermus thermophilus (strain ATCC BAA-163 / DSM 7039 / HB27).